A 124-amino-acid chain; its full sequence is Small polypeptide ROTUNDIFOLIA LIKE 3 (124 aa).

The segment at 1–25 (MEDERWKLSSSKGRSKSGRSCSSSS) is disordered. Asparagine 35 and asparagine 38 each carry an N-linked (GlcNAc...) asparagine glycan. A helical transmembrane segment spans residues 59-75 (AWSAAGAGGGGASSSSS). The tract at residues 60–95 (WSAAGAGGGGASSSSSSQHQHQQQQQQSNNSQRLSK) is disordered. Low complexity predominate over residues 71-91 (SSSSSSQHQHQQQQQQSNNSQ). A glycan (N-linked (GlcNAc...) asparagine) is linked at asparagine 88. The segment at 92–124 (RLSKKCVEAVKEHRARFYIVRRCVSMLVCWRDY) is required for DVL/RTFL small polypeptide activity.

This sequence belongs to the DVL/RTFL small polypeptides family.

Its subcellular location is the cell membrane. Its function is as follows. Small polypeptide acting as a regulatory molecule which coordinates cellular responses required for differentiation, growth and development, probably by restricting polar cell proliferation in lateral organs (e.g. leaves and petioles). This Oryza sativa subsp. indica (Rice) protein is Small polypeptide ROTUNDIFOLIA LIKE 3.